Here is a 172-residue protein sequence, read N- to C-terminus: uncharacterized protein (172 aa).

Helical transmembrane passes span 16 to 36 (IMIV…AYLI), 68 to 88 (SFLI…AGEL), and 89 to 109 (VISH…YIII).

The protein localises to the cell membrane. This is an uncharacterized protein from Methanocaldococcus jannaschii (strain ATCC 43067 / DSM 2661 / JAL-1 / JCM 10045 / NBRC 100440) (Methanococcus jannaschii).